Here is a 424-residue protein sequence, read N- to C-terminus: Light-independent protochlorophyllide reductase subunit N (424 aa).

Residues Cys-26, Cys-51, and Cys-112 each coordinate [4Fe-4S] cluster.

It belongs to the BchN/ChlN family. In terms of assembly, protochlorophyllide reductase is composed of three subunits; BchL, BchN and BchB. Forms a heterotetramer of two BchB and two BchN subunits. [4Fe-4S] cluster serves as cofactor.

The enzyme catalyses chlorophyllide a + oxidized 2[4Fe-4S]-[ferredoxin] + 2 ADP + 2 phosphate = protochlorophyllide a + reduced 2[4Fe-4S]-[ferredoxin] + 2 ATP + 2 H2O. The protein operates within porphyrin-containing compound metabolism; bacteriochlorophyll biosynthesis (light-independent). In terms of biological role, component of the dark-operative protochlorophyllide reductase (DPOR) that uses Mg-ATP and reduced ferredoxin to reduce ring D of protochlorophyllide (Pchlide) to form chlorophyllide a (Chlide). This reaction is light-independent. The NB-protein (BchN-BchB) is the catalytic component of the complex. This is Light-independent protochlorophyllide reductase subunit N from Rhodobacter capsulatus (strain ATCC BAA-309 / NBRC 16581 / SB1003).